A 392-amino-acid chain; its full sequence is Chorismate synthase (392 aa).

Residues arginine 40 and arginine 46 each coordinate NADP(+). FMN is bound by residues 135–137, 256–257, glycine 300, 315–319, and arginine 341; these read RAS, QA, and KPIAT.

It belongs to the chorismate synthase family. In terms of assembly, homotetramer. It depends on FMNH2 as a cofactor.

It carries out the reaction 5-O-(1-carboxyvinyl)-3-phosphoshikimate = chorismate + phosphate. It functions in the pathway metabolic intermediate biosynthesis; chorismate biosynthesis; chorismate from D-erythrose 4-phosphate and phosphoenolpyruvate: step 7/7. Catalyzes the anti-1,4-elimination of the C-3 phosphate and the C-6 proR hydrogen from 5-enolpyruvylshikimate-3-phosphate (EPSP) to yield chorismate, which is the branch point compound that serves as the starting substrate for the three terminal pathways of aromatic amino acid biosynthesis. This reaction introduces a second double bond into the aromatic ring system. This chain is Chorismate synthase, found in Nocardioides sp. (strain ATCC BAA-499 / JS614).